Consider the following 357-residue polypeptide: UDP-N-acetylglucosamine--N-acetylmuramyl-(pentapeptide) pyrophosphoryl-undecaprenol N-acetylglucosamine transferase (357 aa).

Residues 13-15 (TGG), Asn125, Arg161, Ser189, Ile243, and Gln288 contribute to the UDP-N-acetyl-alpha-D-glucosamine site.

The protein belongs to the glycosyltransferase 28 family. MurG subfamily.

It localises to the cell inner membrane. The enzyme catalyses di-trans,octa-cis-undecaprenyl diphospho-N-acetyl-alpha-D-muramoyl-L-alanyl-D-glutamyl-meso-2,6-diaminopimeloyl-D-alanyl-D-alanine + UDP-N-acetyl-alpha-D-glucosamine = di-trans,octa-cis-undecaprenyl diphospho-[N-acetyl-alpha-D-glucosaminyl-(1-&gt;4)]-N-acetyl-alpha-D-muramoyl-L-alanyl-D-glutamyl-meso-2,6-diaminopimeloyl-D-alanyl-D-alanine + UDP + H(+). Its pathway is cell wall biogenesis; peptidoglycan biosynthesis. In terms of biological role, cell wall formation. Catalyzes the transfer of a GlcNAc subunit on undecaprenyl-pyrophosphoryl-MurNAc-pentapeptide (lipid intermediate I) to form undecaprenyl-pyrophosphoryl-MurNAc-(pentapeptide)GlcNAc (lipid intermediate II). In Bordetella parapertussis (strain 12822 / ATCC BAA-587 / NCTC 13253), this protein is UDP-N-acetylglucosamine--N-acetylmuramyl-(pentapeptide) pyrophosphoryl-undecaprenol N-acetylglucosamine transferase.